The primary structure comprises 232 residues: MDKAQQDALKKAAGIEAAKLVENGMIAGLGTGSTVKFLVDELGRRHQEEGLEFTGVTTSRRTQAQAESYGIKIVDIDDVDHIDVTIDGADEVDKNFNGIKGGGAALLWEKIVATNSNQIVWIVDESKVVDTIGKFPLPVEVIPFGAGHVIKKFEACGYKPVLRLDADGKEVRTDENNFVVDLHLERIDHPQELAEDLINTVGVVEHGLFLNMVDKVIVGDPNGPRVMTNANK.

Substrate is bound by residues 31 to 34 (TGST), 87 to 90 (DGAD), and 100 to 103 (KGGG). Glu109 serves as the catalytic Proton acceptor. Residue Lys127 coordinates substrate.

It belongs to the ribose 5-phosphate isomerase family. In terms of assembly, homodimer.

It carries out the reaction aldehydo-D-ribose 5-phosphate = D-ribulose 5-phosphate. The protein operates within carbohydrate degradation; pentose phosphate pathway; D-ribose 5-phosphate from D-ribulose 5-phosphate (non-oxidative stage): step 1/1. Catalyzes the reversible conversion of ribose-5-phosphate to ribulose 5-phosphate. This chain is Ribose-5-phosphate isomerase A, found in Bifidobacterium longum subsp. infantis (strain ATCC 15697 / DSM 20088 / JCM 1222 / NCTC 11817 / S12).